Reading from the N-terminus, the 310-residue chain is Membrane protein insertase YidC 2 (310 aa).

Residues 1–23 (MKKTLKRILFSSLSLSILLLLTG) form the signal peptide. The N-palmitoyl cysteine moiety is linked to residue Cys24. A lipid anchor (S-diacylglycerol cysteine) is attached at Cys24. A run of 5 helical transmembrane segments spans residues 33–53 (PYGV…TYFA), 58–78 (LGFG…ILPL), 135–155 (FGGI…AIFF), 180–200 (LTVI…QGVP), and 219–239 (VFMS…GGIF). Positions 262–310 (EYTKNPPKAYKSNNARKDVTSSTKTTESNQAIITSKKTNRNAGKQKRRG) are disordered. Residues 281 to 297 (TSSTKTTESNQAIITSK) show a composition bias toward polar residues. A compositionally biased stretch (basic residues) spans 298-310 (KTNRNAGKQKRRG).

Belongs to the OXA1/ALB3/YidC family. Type 2 subfamily.

Its subcellular location is the cell membrane. Its function is as follows. Required for the insertion and/or proper folding and/or complex formation of integral membrane proteins into the membrane. Involved in integration of membrane proteins that insert both dependently and independently of the Sec translocase complex, as well as at least some lipoproteins. The chain is Membrane protein insertase YidC 2 from Streptococcus agalactiae serotype III (strain NEM316).